We begin with the raw amino-acid sequence, 265 residues long: Protein Msed_2121 (265 aa).

It belongs to the CinA family.

This Metallosphaera sedula (strain ATCC 51363 / DSM 5348 / JCM 9185 / NBRC 15509 / TH2) protein is Protein Msed_2121.